The following is a 427-amino-acid chain: Enolase (427 aa).

Gln-163 is a binding site for (2R)-2-phosphoglycerate. Catalysis depends on Glu-205, which acts as the Proton donor. Mg(2+) is bound by residues Asp-242, Glu-285, and Asp-312. Positions 337, 366, 367, and 388 each coordinate (2R)-2-phosphoglycerate. Residue Lys-337 is the Proton acceptor of the active site.

The protein belongs to the enolase family. Requires Mg(2+) as cofactor.

The protein localises to the cytoplasm. Its subcellular location is the secreted. It localises to the cell surface. It catalyses the reaction (2R)-2-phosphoglycerate = phosphoenolpyruvate + H2O. It participates in carbohydrate degradation; glycolysis; pyruvate from D-glyceraldehyde 3-phosphate: step 4/5. Functionally, catalyzes the reversible conversion of 2-phosphoglycerate (2-PG) into phosphoenolpyruvate (PEP). It is essential for the degradation of carbohydrates via glycolysis. This Paraburkholderia phytofirmans (strain DSM 17436 / LMG 22146 / PsJN) (Burkholderia phytofirmans) protein is Enolase.